The chain runs to 219 residues: Transmembrane protein 125 (219 aa).

Transmembrane regions (helical) follow at residues 36–56 (LCFA…VALL), 68–88 (LAVG…QLMS), 114–134 (ALVV…LAGL), and 147–167 (MLSV…GLLL).

The protein localises to the membrane. The protein is Transmembrane protein 125 (TMEM125) of Bos taurus (Bovine).